Reading from the N-terminus, the 122-residue chain is Serum amyloid A-2 protein (122 aa).

Positions 1–19 (MKLLTSLVFCSLLLGVCHG) are cleaved as a signal peptide. Residues 89–108 (RGHEDTMADQEANRHGRSGK) are compositionally biased toward basic and acidic residues. Residues 89–122 (RGHEDTMADQEANRHGRSGKDPNYYRPPGLPAKY) are disordered.

The protein belongs to the SAA family. Apolipoprotein of the HDL complex. In terms of tissue distribution, expressed by the liver; secreted in plasma.

It localises to the secreted. In terms of biological role, major acute phase reactant. The protein is Serum amyloid A-2 protein of Mus musculus (Mouse).